We begin with the raw amino-acid sequence, 229 residues long: Large ribosomal subunit protein uL1 (229 aa).

It belongs to the universal ribosomal protein uL1 family. In terms of assembly, part of the 50S ribosomal subunit.

Binds directly to 23S rRNA. The L1 stalk is quite mobile in the ribosome, and is involved in E site tRNA release. Its function is as follows. Protein L1 is also a translational repressor protein, it controls the translation of the L11 operon by binding to its mRNA. The protein is Large ribosomal subunit protein uL1 of Histophilus somni (strain 2336) (Haemophilus somnus).